The sequence spans 73 residues: Plasticin-A1 (73 aa).

The N-terminal stretch at 1–22 is a signal peptide; the sequence is MAFLKKSLFLVLFLAIVPLSIC. Residues 23-42 constitute a propeptide that is removed on maturation; the sequence is EEEKREEENEEKQEDDDQSE. The interval 25 to 45 is disordered; it reads EKREEENEEKQEDDDQSEKRG. Residues 30-40 show a composition bias toward acidic residues; the sequence is ENEEKQEDDDQ. Gly-70 carries the glycine amide modification. Residues 72-73 constitute a propeptide that is removed on maturation; sequence ES.

Belongs to the frog skin active peptide (FSAP) family. Plasticin subfamily. As to expression, expressed by the skin glands.

Its subcellular location is the secreted. It localises to the target cell membrane. In terms of biological role, peptide with no antimicrobial activity. May act in synergy with cationic peptides by enhancing their activity. Has a moderate hemolytic activity. The protein is Plasticin-A1 of Agalychnis annae (Blue-sided leaf frog).